Reading from the N-terminus, the 813-residue chain is MRRALRLLPLPLSIAICLPAMAADKPFNWGLCPTVDPLPGFDGAPAADPKAAEMRQQLPTDIEGDQLSGTSTTPQYQGNVALKRGDQFLGADNLRMDTETGNYIAEGNVRYQDTSFRMVADRAEGNQDTDTHKVTNIRYQLVERRGNGDAESVDLQGQVGQMHRSTYTTCDPSQPIWRVRAPEIDVDNGEGFGTARNAVLQIGNVPVLYFPWFKFPIDDRRQTGLLFPQFGLSRRNGFDYLQPIYLNLAPNYDATLLPRYMSKRGFMFGTEFRYLYEGGRGEVTGNYLPNDKLRDKDRGSVFYSGYHNVNSNWQARSSISWVSDTRYVEDFTSRLNGMGSASSLQSTVGIYGTGETWTAGLMAERWQLTDYTLDERSLPYNRQPRAYFNWEKPFGIFEAGVYAEAVRFTHDDSYFVQPPSPSVPGEANNRDNNDKYVRTNIRNQEYGSGSRLDLKPYVSMPLSGAAWFFTPTLAWRYTAYQLDSTLAKTGPLTGDRSPSRSLPIASVDAGLYFDRETSLLGTNYLNTLEPRMYYLYVPYRDQDDLPVFDTRPFTFSYGQLFRDTRYTGADRQNDANQLTLAVTSRWLRQDDGREKLSLSAGQILYFSDSRVTINNSTNAVAGSEQTIDQGKSAWVVDANYMINDRWSMGATYQWNPNSRKEDLASLRTRYLLDNDGIINLAYRYRRNLIDNSDQLKQADFSFLYPINPSWSAVGRYYYSLQDRKPLEIIGGVQWDSCCLAVRGLVRRFVRNRDGQMDNSIQIEFVLKGLSSFGQNTDRTLRRAILGYYRDDLYLVPPSNTTTNPDDYDPNLIP.

A signal peptide spans 1–22 (MRRALRLLPLPLSIAICLPAMA).

The protein belongs to the LptD family. Component of the lipopolysaccharide transport and assembly complex. Interacts with LptE and LptA.

It is found in the cell outer membrane. Its function is as follows. Together with LptE, is involved in the assembly of lipopolysaccharide (LPS) at the surface of the outer membrane. The protein is LPS-assembly protein LptD of Xanthomonas oryzae pv. oryzae (strain KACC10331 / KXO85).